Reading from the N-terminus, the 550-residue chain is MAAKDVVFGDSARTKMVEGVNILANAVKTTLGPKGRNVVIERSFGGPTITKDGVSVAKEIELKDKLQNMGAQMVKEVASKTADIAGDGTTTATVLAQSIVREGMKYVVSGHNPMDLKRGIDKAVTAAIAELAKISKPCTTTKEIAQVGSISANSDHSIGQRIAEAMEKVGKEGVITVEDGKSLEDELEVVEGMQFDRGYLSPYFINQPEKQVAVLESPYVLLFDKKIANIRDLLPVLEQVAKSGRPLLIIAEDVEGEALATLVVNNIRGIIKTCAVKAPGFGDRRKAMLEDIAILTGGTVIAEEIGLTLEKATLEHLGQAKRIEVGKENTIIIDGAGDAKAIEARVKNIRVQIEEATSDYDKEKLQERVAKLAGGVAVIRVGAATEVEMKEKKARVDDALHATRAAVEEGIVPGGGVALIRAMQGIKGLKGDNADQDAGISIVLRAMQEPLRTIVSNAGEDAGVVVNAVQASTGNNGYNAATGEYGDLVAQGVIDPTKVTKTALVNAASVAGLLLTTDCAISEAPKDESGAGGMPDMGGMGGMGGMGGMM.

ATP-binding positions include 30–33 (TLGP), Lys51, 87–91 (DGTTT), Gly415, 479–481 (NAA), and Asp495.

The protein belongs to the chaperonin (HSP60) family. Forms a cylinder of 14 subunits composed of two heptameric rings stacked back-to-back. Interacts with the co-chaperonin GroES.

Its subcellular location is the cytoplasm. The enzyme catalyses ATP + H2O + a folded polypeptide = ADP + phosphate + an unfolded polypeptide.. Functionally, together with its co-chaperonin GroES, plays an essential role in assisting protein folding. The GroEL-GroES system forms a nano-cage that allows encapsulation of the non-native substrate proteins and provides a physical environment optimized to promote and accelerate protein folding. The protein is Chaperonin GroEL of Polynucleobacter asymbioticus (strain DSM 18221 / CIP 109841 / QLW-P1DMWA-1) (Polynucleobacter necessarius subsp. asymbioticus).